A 227-amino-acid polypeptide reads, in one-letter code: MPVRAILTDIEGTTSAVSFVFDVLFPYAREHLPAFVRRHAAEAEVATQLEAVRAESGEADADIERVIEILLGWIAEDRKATPLKALQGMVWEQGYRASALKGHVYPDAVATMRRWKHEGYQLYVYSSGSIQAQRLIFGCSEAGDLSPLFSGYFDTTSGPKREAASYVRIAEAIGRPPAEILFLSDVLQELDAARAAGMCTCGLAREGGELDGHPTVSSFTAIEPAAC.

Belongs to the HAD-like hydrolase superfamily. MasA/MtnC family. As to quaternary structure, monomer. Requires Mg(2+) as cofactor.

It catalyses the reaction 5-methylsulfanyl-2,3-dioxopentyl phosphate + H2O = 1,2-dihydroxy-5-(methylsulfanyl)pent-1-en-3-one + phosphate. The protein operates within amino-acid biosynthesis; L-methionine biosynthesis via salvage pathway; L-methionine from S-methyl-5-thio-alpha-D-ribose 1-phosphate: step 3/6. It participates in amino-acid biosynthesis; L-methionine biosynthesis via salvage pathway; L-methionine from S-methyl-5-thio-alpha-D-ribose 1-phosphate: step 4/6. Bifunctional enzyme that catalyzes the enolization of 2,3-diketo-5-methylthiopentyl-1-phosphate (DK-MTP-1-P) into the intermediate 2-hydroxy-3-keto-5-methylthiopentenyl-1-phosphate (HK-MTPenyl-1-P), which is then dephosphorylated to form the acireductone 1,2-dihydroxy-3-keto-5-methylthiopentene (DHK-MTPene). In Azotobacter vinelandii (strain DJ / ATCC BAA-1303), this protein is Enolase-phosphatase E1.